Here is a 667-residue protein sequence, read N- to C-terminus: MTFEQAKKRSLVLKEQLEKWNYEYYVNDNPSVSDQEYDRALQELIAIEQQYSELITIDSPTQRVSGQISEKFNKYVHTSPMLSLGNAFNYDDLIHFDEQIKEFTALPEIEYTCELKIDGLSISLVYDNHVLVMGATRGDGLTGEDVTINIKQIKSIPLRIDQPTLIVRGEVYLSVEEFNKINEERVKNGEFKFANPRNAAAGTLRQLDSTIVAKRKLNAFLYYYVNALQDGIQSQYEALQRLEQLKFKINPEYRYCSNIAAVWAYIQEYEPKRNQLGYEIDGIVIKVNNLNLYNRIGYTAKNPKWAIAYKFPAEVVVTKLLNIFPSVGRTGRITYNAVLEPIRIVGTIVRAATLHNADFITERDIRIGDNVQVKKAGDIIPEVINYVAARRQKNAQKWQEATHCPECNSLLERVEGEVDQYCINSVCPKKITRGLEHYCSRNAMNIEGISEKIIERLFKLEYLKSFSDLYQLEQYRAEIIELENFGEKSFENMITSINNSKNNSLERLLFALGIRHVGQKTAKLLARQFKTIDNLAAMNIEQLSIINDIGPIVAASVVDYFAIPANQQELALLRQNGVKMEYFATNQHLAQKFENYRFVITGVLSKSREYFKELIESYGGQVSESVSAKTTYLLAGTDAGNKLVKAQKLNVKIINEEEFQQLLSKED.

NAD(+)-binding positions include 34-38 (DQEYD), 83-84 (SL), and Glu114. The active-site N6-AMP-lysine intermediate is the Lys116. Residues Arg137, Glu170, Lys286, and Lys310 each contribute to the NAD(+) site. Zn(2+)-binding residues include Cys404, Cys407, Cys422, and Cys427. In terms of domain architecture, BRCT spans 588 to 667 (HLAQKFENYR…EFQQLLSKED (80 aa)).

Belongs to the NAD-dependent DNA ligase family. LigA subfamily. Mg(2+) is required as a cofactor. Mn(2+) serves as cofactor.

The enzyme catalyses NAD(+) + (deoxyribonucleotide)n-3'-hydroxyl + 5'-phospho-(deoxyribonucleotide)m = (deoxyribonucleotide)n+m + AMP + beta-nicotinamide D-nucleotide.. In terms of biological role, DNA ligase that catalyzes the formation of phosphodiester linkages between 5'-phosphoryl and 3'-hydroxyl groups in double-stranded DNA using NAD as a coenzyme and as the energy source for the reaction. It is essential for DNA replication and repair of damaged DNA. The protein is DNA ligase of Spiroplasma citri.